Reading from the N-terminus, the 378-residue chain is Putative gustatory receptor 22f (378 aa).

Residues 1–13 (MKMFQPRRGFSCH) are Cytoplasmic-facing. A helical transmembrane segment spans residues 14-34 (LAWFMLQTTLYASWLLGLFPF). Residues 35–48 (TFDSRRKQLKRSRW) are Extracellular-facing. Residues 49-69 (LLLYGFVLHSLAMCLAMSSHL) traverse the membrane as a helical segment. At 70–88 (ASKQRRKYNAFERNPLLEK) the chain is on the cytoplasmic side. A helical membrane pass occupies residues 89–109 (IYMQFQVTTFFTISVLLLMNV). Topologically, residues 110–143 (WKSNTVRKIANELLTLEGQVKDLLTLKNCPNFNC) are extracellular. A helical membrane pass occupies residues 144–164 (FVIKKHVAAIGQFVISIYFCL). At 165 to 178 (CQENSYPKILKILC) the chain is on the cytoplasmic side. A helical membrane pass occupies residues 179–199 (CLPSVGLQLIIMHFHTEIILV). Topologically, residues 200–245 (YRYVWLVNETLEDSHHLSSSRIHALASLYDRLLKLSELVVACNDLQ) are extracellular. Asn-207 is a glycosylation site (N-linked (GlcNAc...) asparagine). The helical transmembrane segment at 246–266 (LILMLIIYLIGNTVQIFFLIV) threads the bilayer. Over 267–354 (LGVSMNKRYI…LCGLFSINHN (88 aa)) the chain is Cytoplasmic. A helical membrane pass occupies residues 355–375 (MGFQMIITSFLYLVYLLQFDF). Topologically, residues 376-378 (MNL) are extracellular.

Belongs to the insect chemoreceptor superfamily. Gustatory receptor (GR) family. Gr22e subfamily. In terms of tissue distribution, taste bristles in the foreleg and labial palps.

The protein resides in the cell membrane. Functionally, probable gustatory receptor which mediates acceptance or avoidance behavior, depending on its substrates. In Drosophila melanogaster (Fruit fly), this protein is Putative gustatory receptor 22f (Gr22f).